The sequence spans 363 residues: Sulfate/thiosulfate import ATP-binding protein CysA (363 aa).

Residues 3–237 (IEINNISKYF…PATRFVLEFL (235 aa)) form the ABC transporter domain. 35 to 42 (GPSGSGKT) is a binding site for ATP.

Belongs to the ABC transporter superfamily. Sulfate/tungstate importer (TC 3.A.1.6) family. The complex is composed of two ATP-binding proteins (CysA), two transmembrane proteins (CysT and CysW) and a solute-binding protein (CysP).

Its subcellular location is the cell inner membrane. The catalysed reaction is sulfate(out) + ATP + H2O = sulfate(in) + ADP + phosphate + H(+). The enzyme catalyses thiosulfate(out) + ATP + H2O = thiosulfate(in) + ADP + phosphate + H(+). Functionally, part of the ABC transporter complex CysAWTP involved in sulfate/thiosulfate import. Responsible for energy coupling to the transport system. The protein is Sulfate/thiosulfate import ATP-binding protein CysA of Yersinia pseudotuberculosis serotype I (strain IP32953).